The following is a 151-amino-acid chain: Natriuretic peptides A (151 aa).

Positions 1–25 (MSSFSTTTVSFLLLLAFQLLGQTRA) are cleaved as a signal peptide. The interval 62–105 (VLSEPNEEAGAALSPLPEVPPWTGEVSPAQRDGGALGRGPWDSS) is disordered. The propeptide occupies 93 to 103 (DGGALGRGPWD). Ser-129 carries the phosphoserine modification. An intrachain disulfide couples Cys-130 to Cys-146. The important for degradation of atrial natriuretic peptide by IDE stretch occupies residues 147-151 (NSFRY).

It belongs to the natriuretic peptide family. In terms of assembly, homodimer; disulfide-linked antiparallel dimer. The precursor molecule is proteolytically cleaved by CORIN at Arg-123 to produce atrial natriuretic peptide. Undergoes further proteolytic cleavage by unknown proteases to give rise to long-acting natriuretic peptide, vessel dilator and kaliuretic peptide. Additional processing gives rise to the auriculin and atriopeptin peptides. In the kidneys, alternative processing by an unknown protease results in the peptide urodilatin. In terms of processing, cleavage by MME initiates degradation of the factor and thereby regulates its activity. Degraded by IDE (in vitro). During IDE degradation, the resulting products can temporarily stimulate NPR2 to produce cGMP, before the fragments are completely degraded and inactivated by IDE (in vitro). Post-translationally, degraded by IDE. Phosphorylation on Ser-129 decreases vasorelaxant activity. In terms of tissue distribution, detected in the kidney distal tubular cells (at protein level). Present in urine (at protein level). Detected in atrial and ventricular plasma samples, and in adipocytes (at protein level). Detected in urine in one study. However, was not detected in urine in another study. In the brain, predominantly expressed in the gray matter with very weak expression in the white matter (at protein level). Localizes to astrocyte-like structures throughout the white matter, and in the cerebral vessels detected in the leptomeningeal and parenchymal vessels, and endothelium and smooth muscle layers (at protein level). Relatively low levels of expression in the kidneys compared to urodilatin (at protein level).

The protein resides in the secreted. The protein localises to the perikaryon. Its subcellular location is the cell projection. Its function is as follows. Hormone that plays a key role in mediating cardio-renal homeostasis, and is involved in vascular remodeling and regulating energy metabolism. Acts by specifically binding and stimulating NPR1 to produce cGMP, which in turn activates effector proteins, such as PRKG1, that drive various biological responses. Regulates vasodilation, natriuresis, diuresis and aldosterone synthesis and is therefore essential for regulating blood pressure, controlling the extracellular fluid volume and maintaining the fluid-electrolyte balance. Also involved in inhibiting cardiac remodeling and cardiac hypertrophy by inducing cardiomyocyte apoptosis and attenuating the growth of cardiomyocytes and fibroblasts. Plays a role in female pregnancy by promoting trophoblast invasion and spiral artery remodeling in uterus, and thus prevents pregnancy-induced hypertension. In adipose tissue, acts in various cGMP- and PKG-dependent pathways to regulate lipid metabolism and energy homeostasis. This includes up-regulating lipid metabolism and mitochondrial oxygen utilization by activating the AMP-activated protein kinase (AMPK), and increasing energy expenditure by acting via MAPK11 to promote the UCP1-dependent thermogenesis of brown adipose tissue. Binds the clearance receptor NPR3 which removes the hormone from circulation. Functionally, may have a role in cardio-renal homeostasis through regulation of natriuresis, diuresis, vasodilation, and inhibiting aldosterone synthesis. In vitro, promotes the production of cGMP and induces vasodilation. May promote natriuresis, at least in part, by enhancing prostaglandin E2 synthesis resulting in the inhibition of renal Na+-K+-ATPase. However reports on the involvement of this peptide in mammal blood volume and blood pressure homeostasis are conflicting; according to a report, in vivo it is not sufficient to activate cGMP and does not inhibit collecting duct transport nor effect diuresis and natriuresis. Appears to bind to specific receptors that are distinct from the receptors bound by atrial natriuretic peptide and vessel dilator. Possibly enhances protein excretion in urine by decreasing proximal tubular protein reabsorption. May have a role in cardio-renal homeostasis through regulation of natriuresis, diuresis, and vasodilation. In vitro, promotes the production of cGMP and induces vasodilation. May promote natriuresis, at least in part, by enhancing prostaglandin E2 synthesis resulting in the inhibition of renal Na+-K+-ATPase. However reports on the involvement of this peptide in mammal blood volume and blood pressure homeostasis are conflicting; according to a report it is not sufficient to activate cGMP and does not inhibit collecting duct transport nor effect diuresis and natriuresis. Appears to bind to specific receptors that are distinct from the receptors bound by the atrial natriuretic and long-acting natriuretic peptides. Possibly functions in protein excretion in urine by maintaining the integrity of the proximal tubules and enhancing protein excretion by decreasing proximal tubular protein reabsorption. In terms of biological role, may have a role in cardio-renal homeostasis through regulation of diuresis and inhibiting aldosterone synthesis. In vitro, promotes the production of cGMP and induces vasodilation. May promote natriuresis, at least in part, by enhancing prostaglandin E2 synthesis resulting in the inhibition of renal Na+-K+-ATPase. May have a role in potassium excretion but not sodium excretion (natriuresis). Possibly enhances protein excretion in urine by decreasing proximal tubular protein reabsorption. Its function is as follows. Hormone produced in the kidneys that appears to be important for maintaining cardio-renal homeostasis. Mediates vasodilation, natriuresis and diuresis primarily in the renal system, in order to maintain the extracellular fluid volume and control the fluid-electrolyte balance. Specifically binds and stimulates cGMP production by renal transmembrane receptors, likely NPR1. Urodilatin not ANP, may be the natriuretic peptide responsible for the regulation of sodium and water homeostasis in the kidney. Functionally, may have a role in cardio-renal homeostasis through regulation of natriuresis and vasodilation. In vivo promotes natriuresis and in vitro, vasodilates renal artery strips. May have a role in cardio-renal homeostasis through regulation of regulation of natriuresis and vasodilation. In vivo promotes natriuresis. In vitro, vasodilates intestinal smooth muscle but not smooth muscle strips. In terms of biological role, may have a role in cardio-renal homeostasis through regulation of natriuresis and vasodilation. In vivo promotes natriuresis. In vitro, selectively vasodilates intestinal and vascular smooth muscle strips. Its function is as follows. May have a role in cardio-renal homeostasis through regulation of natriuresis and vasodilation. In vivo promotes natriuresis. In vitro, selectively vasodilates intestinal smooth muscle but not vascular smooth muscle strips. This Homo sapiens (Human) protein is Natriuretic peptides A (NPPA).